We begin with the raw amino-acid sequence, 90 residues long: UPF0297 protein ABC1593 (90 aa).

It belongs to the UPF0297 family.

This is UPF0297 protein ABC1593 from Shouchella clausii (strain KSM-K16) (Alkalihalobacillus clausii).